Here is a 1273-residue protein sequence, read N- to C-terminus: DNA-directed RNA polymerase subunit beta (1273 aa).

The protein belongs to the RNA polymerase beta chain family. The RNAP catalytic core consists of 2 alpha, 1 beta, 1 beta' and 1 omega subunit. When a sigma factor is associated with the core the holoenzyme is formed, which can initiate transcription.

It carries out the reaction RNA(n) + a ribonucleoside 5'-triphosphate = RNA(n+1) + diphosphate. In terms of biological role, DNA-dependent RNA polymerase catalyzes the transcription of DNA into RNA using the four ribonucleoside triphosphates as substrates. This Phytoplasma mali (strain AT) protein is DNA-directed RNA polymerase subunit beta.